We begin with the raw amino-acid sequence, 601 residues long: Aspartate--tRNA(Asp/Asn) ligase (601 aa).

Glu174 is an L-aspartate binding site. Residues 198 to 201 (QLFK) are aspartate. Arg220 contacts L-aspartate. ATP is bound by residues 220–222 (RDE) and Gln229. L-aspartate is bound at residue His459. An ATP-binding site is contributed by Glu493. Arg500 is a binding site for L-aspartate. 545–548 (GLDR) contacts ATP.

It belongs to the class-II aminoacyl-tRNA synthetase family. Type 1 subfamily. In terms of assembly, homodimer.

The protein resides in the cytoplasm. It carries out the reaction tRNA(Asx) + L-aspartate + ATP = L-aspartyl-tRNA(Asx) + AMP + diphosphate. In terms of biological role, aspartyl-tRNA synthetase with relaxed tRNA specificity since it is able to aspartylate not only its cognate tRNA(Asp) but also tRNA(Asn). Reaction proceeds in two steps: L-aspartate is first activated by ATP to form Asp-AMP and then transferred to the acceptor end of tRNA(Asp/Asn). The protein is Aspartate--tRNA(Asp/Asn) ligase of Variovorax paradoxus (strain S110).